A 99-amino-acid chain; its full sequence is Protein translation factor SUI1 homolog (99 aa).

This sequence belongs to the SUI1 family.

The protein is Protein translation factor SUI1 homolog of Pyrococcus horikoshii (strain ATCC 700860 / DSM 12428 / JCM 9974 / NBRC 100139 / OT-3).